The following is an 800-amino-acid chain: Receptor like protein 26 (800 aa).

Positions Met-1–Ser-19 are cleaved as a signal peptide. The Extracellular portion of the chain corresponds to Phe-20–Lys-733. Residues Asn-49, Asn-61, Asn-83, Asn-96, Asn-101, and Asn-113 are each glycosylated (N-linked (GlcNAc...) asparagine). LRR repeat units follow at residues Leu-89 to Asn-113, Thr-115 to Leu-138, Ile-139 to Leu-161, Thr-162 to Thr-185, Pro-187 to Ser-212, Leu-214 to Leu-235, Ile-236 to Pro-259, Leu-260 to Asp-281, Pro-285 to Thr-307, Leu-308 to Leu-332, Arg-334 to Asn-357, and Ser-358 to Ser-381. N-linked (GlcNAc...) asparagine glycosylation is found at Asn-145 and Asn-160. Asn-207 carries an N-linked (GlcNAc...) asparagine glycan. Asn-247 is a glycosylation site (N-linked (GlcNAc...) asparagine). N-linked (GlcNAc...) asparagine glycans are attached at residues Asn-342 and Asn-357. An LRR 13; degenerate repeat occupies Ile-382–Asn-401. N-linked (GlcNAc...) asparagine glycosylation is found at Asn-388 and Asn-401. 10 LRR repeats span residues Arg-402–Leu-423, Ser-424–Ser-446, Ala-448–Cys-471, Ser-472–Ala-494, Leu-495–Pro-519, Phe-522–Asn-546, Leu-591–Leu-615, Lys-616–Val-639, Thr-640–Leu-663, and Phe-665–Gly-688. Asn-470 carries an N-linked (GlcNAc...) asparagine glycan. 2 N-linked (GlcNAc...) asparagine glycosylation sites follow: Asn-622 and Asn-638. The helical transmembrane segment at Ala-734–Ala-754 threads the bilayer. Topologically, residues Ser-755–Ile-800 are cytoplasmic.

The protein belongs to the RLP family.

Its subcellular location is the cell membrane. In Arabidopsis thaliana (Mouse-ear cress), this protein is Receptor like protein 26.